The following is a 200-amino-acid chain: ATP synthase subunit s, mitochondrial (200 aa).

A mitochondrion-targeting transit peptide spans 1 to 25; it reads MMPFGKISQQLCGVKKLPWSCDSRY. Positions 1–61 are N-terminal domain; the sequence is MMPFGKISQQ…SEWLLRCGAM (61 aa). Mg(2+) is bound at residue Gly59. LRR repeat units lie at residues 62 to 87, 88 to 116, 117 to 141, and 142 to 173; these read VRYH…KYKI, QAID…KIRL, CKCH…KTIL, and EMEI…LSDL. Mg(2+) is bound at residue Thr93.

It belongs to the ATP synthase subunit s family. As to quaternary structure, homotetramer. Associates with ATP synthase.

Its subcellular location is the mitochondrion. It localises to the mitochondrion inner membrane. In terms of biological role, involved in regulation of mitochondrial membrane ATP synthase. Necessary for H(+) conduction of ATP synthase. Facilitates energy-driven catalysis of ATP synthesis by blocking a proton leak through an alternative proton exit pathway. The protein is ATP synthase subunit s, mitochondrial of Homo sapiens (Human).